The primary structure comprises 487 residues: N-succinylglutamate 5-semialdehyde dehydrogenase (487 aa).

221-226 (GSSDTG) is a binding site for NAD(+). Residues glutamate 244 and cysteine 278 contribute to the active site.

It belongs to the aldehyde dehydrogenase family. AstD subfamily.

It catalyses the reaction N-succinyl-L-glutamate 5-semialdehyde + NAD(+) + H2O = N-succinyl-L-glutamate + NADH + 2 H(+). It participates in amino-acid degradation; L-arginine degradation via AST pathway; L-glutamate and succinate from L-arginine: step 4/5. Its function is as follows. Catalyzes the NAD-dependent reduction of succinylglutamate semialdehyde into succinylglutamate. This chain is N-succinylglutamate 5-semialdehyde dehydrogenase, found in Burkholderia multivorans (strain ATCC 17616 / 249).